The primary structure comprises 101 residues: Protein RnfH (101 aa).

The protein belongs to the UPF0125 (RnfH) family.

This chain is Protein RnfH, found in Coxiella burnetii (strain CbuK_Q154) (Coxiella burnetii (strain Q154)).